Reading from the N-terminus, the 256-residue chain is MVGPARPQIVLFGSSIVQMSFGHGGWGAILSEVYARKADIILRGYYGWNSSRALEVVDQVFPKDAAVQPSLVIVYFGGNDSMAPHSSGLGPHVPLTEYVDNMKKIALHLQSLSDFTRIIFLSSPPVDEAKVRQNQSPYLSEVIRTNDLCKTYSDACVELCQELGLEVVDLFSTFQKADDWKTVCFTDGIHLSAQGSKIVAGEILRVVKEAEWHPSLHWKSMPTEFADDSPYDLVSADGKQTVNSSEWTYFWEEQWD.

An N-terminal signal peptide occupies residues 1–27 (MVGPARPQIVLFGSSIVQMSFGHGGWG). The Nucleophile role is filled by S15. N-linked (GlcNAc...) asparagine glycans are attached at residues N49 and N79. H213 is an active-site residue. Residue N243 is glycosylated (N-linked (GlcNAc...) asparagine).

This sequence belongs to the 'GDSL' lipolytic enzyme family. Specifically expressed in anthers (stages 8-12).

Its subcellular location is the secreted. This Arabidopsis thaliana (Mouse-ear cress) protein is GDSL esterase/lipase CPRD49 (CPRD49).